The sequence spans 282 residues: Putative hydrolase Bcep18194_B0137 (282 aa).

Mg(2+)-binding residues include Glu-124, Glu-126, and Asp-155.

It belongs to the FAH family. It depends on Mg(2+) as a cofactor.

The polypeptide is Putative hydrolase Bcep18194_B0137 (Burkholderia lata (strain ATCC 17760 / DSM 23089 / LMG 22485 / NCIMB 9086 / R18194 / 383)).